The primary structure comprises 174 residues: Sarcoplasmic calcium-binding protein (174 aa).

Residue S1 is modified to N-acetylserine. 4 consecutive EF-hand domains span residues L3 to E38, G55 to A90, V91 to N126, and L125 to N160. Positions 16, 18, 20, and 27 each coordinate Ca(2+). Ca(2+)-binding residues include D104, N106, D108, M110, E115, D138, N140, D142, and E149.

In terms of biological role, like parvalbumins, SCPs seem to be more abundant in fast contracting muscles, but no functional relationship can be established from this distribution. This is Sarcoplasmic calcium-binding protein from Perinereis vancaurica tetradentata (Sandworm).